Here is a 442-residue protein sequence, read N- to C-terminus: Cytokine receptor-like factor 3 (442 aa).

A coiled-coil region spans residues 10 to 46; the sequence is EVLLQEARENVEAAQSYRRELGQRLQGLREAQRQIKE. Residues 181-274 enclose the Fibronectin type-III domain; it reads PPVQIEELIE…PQTGHSTLVP (94 aa).

Belongs to the cytokine receptor-like factor 3 family.

It is found in the cytoplasm. Functionally, may play a role in the negative regulation of cell cycle progression. This chain is Cytokine receptor-like factor 3 (Crlf3), found in Mus musculus (Mouse).